Here is a 409-residue protein sequence, read N- to C-terminus: Cuticle-degrading serine protease (409 aa).

A signal peptide spans 1–21; that stretch reads MLTNGLISLLAIAGLATNAFA. Residues 22 to 123 constitute a propeptide that is removed on maturation; it reads GPIRKVSNAG…VEQDTVVTTY (102 aa). The Inhibitor I9 domain maps to 39-122; sequence KYIVVLKKGL…YVEQDTVVTT (84 aa). A Peptidase S8 domain is found at 130–409; sequence TWGLDRISHE…PNKIAYNGYA (280 aa). D164 functions as the Charge relay system in the catalytic mechanism. Residue N178 is glycosylated (N-linked (GlcNAc...) asparagine). H200 functions as the Charge relay system in the catalytic mechanism. The N-linked (GlcNAc...) asparagine glycan is linked to N252. S353 (charge relay system) is an active-site residue.

This sequence belongs to the peptidase S8 family.

The protein localises to the secreted. With respect to regulation, inhibited by PMSF, SSI, the peptide Phe-Val and by Phe, but not by EDTA. Functionally, hydrolyzes gelatin, casein, the chromogenic substrate azocoll and the cuticle of the nematode P.redivivus. Immobilizes P.redivivus. This chain is Cuticle-degrading serine protease, found in Arthrobotrys oligospora (strain ATCC 24927 / CBS 115.81 / DSM 1491) (Nematode-trapping fungus).